The chain runs to 260 residues: Indole-3-glycerol phosphate synthase (260 aa).

This sequence belongs to the TrpC family.

The catalysed reaction is 1-(2-carboxyphenylamino)-1-deoxy-D-ribulose 5-phosphate + H(+) = (1S,2R)-1-C-(indol-3-yl)glycerol 3-phosphate + CO2 + H2O. It functions in the pathway amino-acid biosynthesis; L-tryptophan biosynthesis; L-tryptophan from chorismate: step 4/5. In Ruminiclostridium cellulolyticum (strain ATCC 35319 / DSM 5812 / JCM 6584 / H10) (Clostridium cellulolyticum), this protein is Indole-3-glycerol phosphate synthase.